Reading from the N-terminus, the 488-residue chain is Auxin transporter-like protein 1 (488 aa).

A disordered region spans residues 1–36 (MSGEKQAEESIVVSGEDEVAGRKVEDSAAEEDIDGN). Residues 1 to 64 (MSGEKQAEES…DAWFSCASNQ (64 aa)) lie on the Cytoplasmic side of the membrane. The helical transmembrane segment at 65 to 82 (VAQVLLTLPYSFSQLGML) threads the bilayer. At 83–84 (SG) the chain is on the extracellular side. The chain crosses the membrane as a helical span at residues 85–105 (ILLQIFYGLMGSWTAYLISVL). Residues 106–141 (YVEYRARMEKQEAKSFKNHVIQWFEVLDGLLGPYWK) lie on the Cytoplasmic side of the membrane. A helical membrane pass occupies residues 142–162 (AAGLAFNCTFLLFGSVIQLIA). Topologically, residues 163–178 (CASNIYYINDRLDKRT) are extracellular. Residues 179 to 199 (WTYIFGACCATTVFIPSFHNY) traverse the membrane as a helical segment. Residues 200–202 (RIW) are Cytoplasmic-facing. Residues 203–223 (SFLGLGMTTYTAWYLTIASFL) traverse the membrane as a helical segment. The Extracellular segment spans residues 224-238 (HGQAEGVTHSGPTKL). The helical transmembrane segment at 239–259 (VLYFTGATNILYTFGGHAVTV) threads the bilayer. The Cytoplasmic segment spans residues 260–273 (EIMHAMWKPRKFKS). A helical transmembrane segment spans residues 274 to 294 (IYLMATLYVFTLTLPSASAVY). Over 295 to 320 (WAFGDQLLNHSNAFSLLPKTRFRDTA) the chain is Extracellular. Asn303 is a glycosylation site (N-linked (GlcNAc...) asparagine). A helical membrane pass occupies residues 321 to 341 (VILMLIHQFITFGFACTPLYF). The Cytoplasmic portion of the chain corresponds to 342-362 (VWEKAIGMHHTKSLCLRALVR). The helical transmembrane segment at 363-383 (LPVVVPIWFLAIIFPFFGPIN) threads the bilayer. Position 384 (Ser384) is a topological domain, extracellular. A helical membrane pass occupies residues 385-405 (AVGALLVTFTVYIIPALAHML). At 406-427 (TYRTASARRNAAEKPPFFIPSW) the chain is on the cytoplasmic side. The chain crosses the membrane as a helical span at residues 428-448 (AGVYVINAFIVVWVLVLGFGF). Over 449-488 (GGWASMTNFIRQIDTFGLFAKCYQCKPPPAPIAAGAHHRR) the chain is Extracellular.

Belongs to the amino acid/polyamine transporter 2 family. Amino acid/auxin permease (AAAP) (TC 2.A.18.1) subfamily.

The protein localises to the cell membrane. In terms of biological role, carrier protein involved in proton-driven auxin influx. Mediates the formation of auxin gradient from developing leaves (site of auxin biosynthesis) to tips by contributing to the loading of auxin in vascular tissues and facilitating acropetal (base to tip) auxin transport within inner tissues of the root apex, and basipetal (tip to base) auxin transport within outer tissues of the root apex. This Arabidopsis thaliana (Mouse-ear cress) protein is Auxin transporter-like protein 1 (LAX1).